The sequence spans 612 residues: Sulfite reductase [NADPH] hemoprotein beta-component (612 aa).

The segment at 1–26 (MDDHKPIETPDGPAVDTPGIGARRYE) is disordered. Cys-469, Cys-475, Cys-514, and Cys-518 together coordinate [4Fe-4S] cluster. Cys-518 contacts siroheme.

It belongs to the nitrite and sulfite reductase 4Fe-4S domain family. In terms of assembly, alpha(8)-beta(8). The alpha component is a flavoprotein, the beta component is a hemoprotein. Siroheme serves as cofactor. The cofactor is [4Fe-4S] cluster.

It catalyses the reaction hydrogen sulfide + 3 NADP(+) + 3 H2O = sulfite + 3 NADPH + 4 H(+). It participates in sulfur metabolism; hydrogen sulfide biosynthesis; hydrogen sulfide from sulfite (NADPH route): step 1/1. Its function is as follows. Component of the sulfite reductase complex that catalyzes the 6-electron reduction of sulfite to sulfide. This is one of several activities required for the biosynthesis of L-cysteine from sulfate. This Methylorubrum extorquens (strain CM4 / NCIMB 13688) (Methylobacterium extorquens) protein is Sulfite reductase [NADPH] hemoprotein beta-component.